The sequence spans 250 residues: Cytochrome c oxidase subunit 2 (250 aa).

Residues 1-27 (MGLLFNNLIMNFDAPSPWGIYFQDSAT) lie on the Mitochondrial intermembrane side of the membrane. Residues 28–61 (PQMEGLVELHDNIMYYLVVILFGVGWILLSIIRN) form a helical membrane-spanning segment. Residues 62-77 (YISTKSPISHKYLNHG) lie on the Mitochondrial matrix side of the membrane. The chain crosses the membrane as a helical span at residues 78 to 107 (TLIELIWTITPAVILILIAFPSFKLLYLMD). Residues 108–250 (EVSDPSMSVL…EKFLTWLEEQ (143 aa)) lie on the Mitochondrial intermembrane side of the membrane. Cu cation-binding residues include His-185, Cys-220, Glu-222, Cys-224, His-228, and Met-231. Glu-222 provides a ligand contact to Mg(2+).

This sequence belongs to the cytochrome c oxidase subunit 2 family. In terms of assembly, component of the cytochrome c oxidase (complex IV, CIV), a multisubunit enzyme composed of 11 subunits. The complex is composed of a catalytic core of 3 subunits Cox1, Cox2 and Cox3, encoded in the mitochondrial DNA, and 8 supernumerary subunits Cox4, Cox5a/Cox5, Cox6, Cox7, Cox8, Cox7a/Cox9, Cox6b/Cox12 and Cox6a/Cox13, which are encoded in the nuclear genome. The complex exists as a monomer or a dimer and forms respiratory supercomplexes (SCs) in the inner mitochondrial membrane with NADH-ubiquinone oxidoreductase (complex I, CI) and ubiquinol-cytochrome c oxidoreductase (cytochrome b-c1 complex, complex III, CIII), resulting in various different assemblies (supercomplexes I(1)IV(1), I(1)III(3)IV(2), III(2)IV(1) and III(2)IV(2) as well as larger supercomplexes of compositions like I(1)III(2)IV(5-6)). Cu cation serves as cofactor.

It localises to the mitochondrion inner membrane. The catalysed reaction is 4 Fe(II)-[cytochrome c] + O2 + 8 H(+)(in) = 4 Fe(III)-[cytochrome c] + 2 H2O + 4 H(+)(out). Component of the cytochrome c oxidase, the last enzyme in the mitochondrial electron transport chain which drives oxidative phosphorylation. The respiratory chain contains 3 multisubunit complexes succinate dehydrogenase (complex II, CII), ubiquinol-cytochrome c oxidoreductase (cytochrome b-c1 complex, complex III, CIII) and cytochrome c oxidase (complex IV, CIV), that cooperate to transfer electrons derived from NADH and succinate to molecular oxygen, creating an electrochemical gradient over the inner membrane that drives transmembrane transport and the ATP synthase. Cytochrome c oxidase is the component of the respiratory chain that catalyzes the reduction of oxygen to water. Electrons originating from reduced cytochrome c in the intermembrane space (IMS) are transferred via the dinuclear copper A center (CU(A)) of Cox2 and heme A of Cox1 to the active site in Cox1, a binuclear center (BNC) formed by heme A3 and copper B (CU(B)). The BNC reduces molecular oxygen to 2 water molecules using 4 electrons from cytochrome c in the IMS and 4 protons from the mitochondrial matrix. This chain is Cytochrome c oxidase subunit 2 (cox-2), found in Neurospora crassa (strain ATCC 24698 / 74-OR23-1A / CBS 708.71 / DSM 1257 / FGSC 987).